A 74-amino-acid chain; its full sequence is Putative membrane protein insertion efficiency factor (74 aa).

It belongs to the UPF0161 family.

The protein localises to the cell inner membrane. Could be involved in insertion of integral membrane proteins into the membrane. The sequence is that of Putative membrane protein insertion efficiency factor from Leptospira interrogans serogroup Icterohaemorrhagiae serovar copenhageni (strain Fiocruz L1-130).